The following is a 350-amino-acid chain: Methionine import ATP-binding protein MetN 1 (350 aa).

An ABC transporter domain is found at 12 to 251 (IDLKNITVLF…PSREVTQDFV (240 aa)). Residue 48 to 55 (GYSGAGKS) coordinates ATP.

The protein belongs to the ABC transporter superfamily. Methionine importer (TC 3.A.1.24) family. The complex is composed of two ATP-binding proteins (MetN), two transmembrane proteins (MetI) and a solute-binding protein (MetQ).

Its subcellular location is the cell membrane. It catalyses the reaction L-methionine(out) + ATP + H2O = L-methionine(in) + ADP + phosphate + H(+). The enzyme catalyses D-methionine(out) + ATP + H2O = D-methionine(in) + ADP + phosphate + H(+). Its function is as follows. Part of the ABC transporter complex MetNIQ involved in methionine import. Responsible for energy coupling to the transport system. The chain is Methionine import ATP-binding protein MetN 1 from Oenococcus oeni (strain ATCC BAA-331 / PSU-1).